A 96-amino-acid chain; its full sequence is Small ribosomal subunit protein bS6 (96 aa).

Belongs to the bacterial ribosomal protein bS6 family.

Its function is as follows. Binds together with bS18 to 16S ribosomal RNA. This Carboxydothermus hydrogenoformans (strain ATCC BAA-161 / DSM 6008 / Z-2901) protein is Small ribosomal subunit protein bS6.